Reading from the N-terminus, the 472-residue chain is Bone morphogenetic protein 3 (472 aa).

An N-terminal signal peptide occupies residues 1–22 (MAGASRLLFLWLGCFCVSLAQG). Residues 23–362 (ERPKPPFPEL…EQTLKKARRK (340 aa)) constitute a propeptide that is removed on maturation. Residues 27–37 (PPFPELRKAVP) are compositionally biased toward basic and acidic residues. A disordered region spans residues 27-53 (PPFPELRKAVPGDRTAGGGPDSELQPQ). Residues Asn-117, Asn-141, Asn-175, and Asn-220 are each glycosylated (N-linked (GlcNAc...) asparagine). Residues 320–350 (PYKTLQAQAPEKSKNKKKQRKGPHRKSQTLQ) form a disordered region. Positions 333 to 346 (KNKKKQRKGPHRKS) are enriched in basic residues. 3 cysteine pairs are disulfide-bonded: Cys-370–Cys-437, Cys-399–Cys-469, and Cys-403–Cys-471. Asn-463 carries an N-linked (GlcNAc...) asparagine glycan.

This sequence belongs to the TGF-beta family. As to quaternary structure, homodimer; disulfide-linked. Interacts with type II receptor ACVR2B. Expressed in adult and fetal cartilage.

The protein resides in the secreted. Functionally, growth factor of the TGF-beta superfamily that plays an essential role in developmental process by inducing and patterning early skeletal formation and by negatively regulating bone density. Antagonizes the ability of certain osteogenic BMPs to induce osteoprogenitor differentiation and ossification. Initiates signaling cascades by associating with type II receptor ACVR2B to activate SMAD2-dependent and SMAD-independent signaling cascades including TAK1 and JNK pathways. The sequence is that of Bone morphogenetic protein 3 (BMP3) from Homo sapiens (Human).